A 60-amino-acid polypeptide reads, in one-letter code: Large ribosomal subunit protein bL32 (60 aa).

2 disordered regions span residues 1 to 28 (MAVQ…PGIA) and 41 to 60 (HISP…KSEA). Residues 9-19 (SPSKRGMHRSH) show a composition bias toward basic residues.

Belongs to the bacterial ribosomal protein bL32 family.

This Verminephrobacter eiseniae (strain EF01-2) protein is Large ribosomal subunit protein bL32.